A 157-amino-acid chain; its full sequence is Small ribosomal subunit protein uS7 (157 aa).

This sequence belongs to the universal ribosomal protein uS7 family. As to quaternary structure, part of the 30S ribosomal subunit. Contacts proteins S9 and S11.

In terms of biological role, one of the primary rRNA binding proteins, it binds directly to 16S rRNA where it nucleates assembly of the head domain of the 30S subunit. Is located at the subunit interface close to the decoding center, probably blocks exit of the E-site tRNA. This Stenotrophomonas maltophilia (strain R551-3) protein is Small ribosomal subunit protein uS7.